The following is a 264-amino-acid chain: S-adenosylmethionine decarboxylase proenzyme (264 aa).

Residue Ser-112 is the Schiff-base intermediate with substrate; via pyruvic acid of the active site. Ser-112 carries the post-translational modification Pyruvic acid (Ser); by autocatalysis. Catalysis depends on His-117, which acts as the Proton acceptor; for processing activity. The active-site Proton donor; for catalytic activity is Cys-140.

It belongs to the prokaryotic AdoMetDC family. Type 2 subfamily. As to quaternary structure, heterooctamer of four alpha and four beta chains arranged as a tetramer of alpha/beta heterodimers. It depends on pyruvate as a cofactor. In terms of processing, is synthesized initially as an inactive proenzyme. Formation of the active enzyme involves a self-maturation process in which the active site pyruvoyl group is generated from an internal serine residue via an autocatalytic post-translational modification. Two non-identical subunits are generated from the proenzyme in this reaction, and the pyruvate is formed at the N-terminus of the alpha chain, which is derived from the carboxyl end of the proenzyme. The post-translation cleavage follows an unusual pathway, termed non-hydrolytic serinolysis, in which the side chain hydroxyl group of the serine supplies its oxygen atom to form the C-terminus of the beta chain, while the remainder of the serine residue undergoes an oxidative deamination to produce ammonia and the pyruvoyl group blocking the N-terminus of the alpha chain.

The enzyme catalyses S-adenosyl-L-methionine + H(+) = S-adenosyl 3-(methylsulfanyl)propylamine + CO2. It functions in the pathway amine and polyamine biosynthesis; S-adenosylmethioninamine biosynthesis; S-adenosylmethioninamine from S-adenosyl-L-methionine: step 1/1. Functionally, catalyzes the decarboxylation of S-adenosylmethionine to S-adenosylmethioninamine (dcAdoMet), the propylamine donor required for the synthesis of the polyamines spermine and spermidine from the diamine putrescine. The protein is S-adenosylmethionine decarboxylase proenzyme of Escherichia coli O127:H6 (strain E2348/69 / EPEC).